We begin with the raw amino-acid sequence, 262 residues long: MVKVAYVQMNPQILEPDKNYSKAEKLIKEASKQGAQLVVLPELFDTGYNFETREEVFEIAQKIPEGETTTFLMDVARDTGVYIVAGTAEKDGDVLYNSAVVVGPRGFIGKYRKIHLFYREKFFFEPGDLGFRVFDLGFMKVGVMICFDWFFPESARTLALKGADVIAHPANLVMPYAPRAMPIRALENKVYTVTADRVGEERGLKFIGKSLIASPKAEVLSMASETEEEVGVAEIDLYLVRNKRINDLNDIFKDRREEYYFR.

The CN hydrolase domain occupies 2-237 (VKVAYVQMNP…EEVGVAEIDL (236 aa)). E42 acts as the Proton acceptor in catalysis. K113 serves as the catalytic Proton donor. C146 functions as the Nucleophile in the catalytic mechanism. 173-174 (VM) is a substrate binding site.

The protein belongs to the carbon-nitrogen hydrolase superfamily. In terms of assembly, homodimer.

The catalysed reaction is a nitrile + 2 H2O = a carboxylate + NH4(+). Enzymatic activity is inhibited in the presence of acetone, methanol and metal ions such as Ag(2+) and Hg(2+). Is also inhibited by various thiol reagents such as DTNB, p-chloromercuribenzoate, p-hydroxymercuribenzoate, iodacetamide and iodacetate. EDTA has no influence on activity. Functionally, nitrilase that hydrolyzes preferentially aliphatic nitriles like malononitrile and fumaronitrile in vitro. These dinitriles are converted to the corresponding monoacid mononitriles, showing the enzyme is regioselective. Cannot hydrolyze compounds with a nitrile group bound to an aromatic ring or amino acid. Its biological role is unknown. The polypeptide is Nitrilase (Pyrococcus abyssi (strain GE5 / Orsay)).